A 348-amino-acid polypeptide reads, in one-letter code: Selenide, water dikinase (348 aa).

The active site involves cysteine 17. ATP-binding positions include lysine 20 and 48–50 (TSD). Aspartate 51 is a Mg(2+) binding site. Residues aspartate 68, aspartate 91, and 139–141 (GHT) each bind ATP. Aspartate 91 lines the Mg(2+) pocket. Aspartate 227 contacts Mg(2+).

The protein belongs to the selenophosphate synthase 1 family. Class I subfamily. Homodimer. Mg(2+) is required as a cofactor.

The enzyme catalyses hydrogenselenide + ATP + H2O = selenophosphate + AMP + phosphate + 2 H(+). Functionally, synthesizes selenophosphate from selenide and ATP. This is Selenide, water dikinase from Dechloromonas aromatica (strain RCB).